A 251-amino-acid chain; its full sequence is Flap endonuclease Xni (251 aa).

Asp104 lines the Mg(2+) pocket. In terms of domain architecture, 5'-3' exonuclease spans 160 to 250 (VLPRQLPDYW…SGNLQQLRLK (91 aa)). K(+) is bound by residues Leu171, Ala172, Pro180, Val182, and Val185. The segment at 184–189 (GVGAKT) is interaction with DNA.

Belongs to the Xni family. Requires Mg(2+) as cofactor. The cofactor is K(+).

Its function is as follows. Has flap endonuclease activity. During DNA replication, flap endonucleases cleave the 5'-overhanging flap structure that is generated by displacement synthesis when DNA polymerase encounters the 5'-end of a downstream Okazaki fragment. The polypeptide is Flap endonuclease Xni (Yersinia pseudotuberculosis serotype I (strain IP32953)).